Consider the following 464-residue polypeptide: tRNA-2-methylthio-N(6)-dimethylallyladenosine synthase (464 aa).

The region spanning 19–135 is the MTTase N-terminal domain; that stretch reads GSYWITTFGC…LENLLGKVDL (117 aa). Positions 28, 64, 98, 170, 174, and 177 each coordinate [4Fe-4S] cluster. The 239-residue stretch at 156-394 folds into the Radical SAM core domain; it reads RESSICGWVN…DLVEKTARSR (239 aa). In terms of domain architecture, TRAM spans 396 to 464; sequence KRYINNIESV…PFSLTGELYL (69 aa).

Belongs to the methylthiotransferase family. MiaB subfamily. In terms of assembly, monomer. [4Fe-4S] cluster serves as cofactor.

The protein localises to the cytoplasm. It catalyses the reaction N(6)-dimethylallyladenosine(37) in tRNA + (sulfur carrier)-SH + AH2 + 2 S-adenosyl-L-methionine = 2-methylsulfanyl-N(6)-dimethylallyladenosine(37) in tRNA + (sulfur carrier)-H + 5'-deoxyadenosine + L-methionine + A + S-adenosyl-L-homocysteine + 2 H(+). Catalyzes the methylthiolation of N6-(dimethylallyl)adenosine (i(6)A), leading to the formation of 2-methylthio-N6-(dimethylallyl)adenosine (ms(2)i(6)A) at position 37 in tRNAs that read codons beginning with uridine. In Prochlorococcus marinus (strain AS9601), this protein is tRNA-2-methylthio-N(6)-dimethylallyladenosine synthase.